A 705-amino-acid chain; its full sequence is MARDYPLELCRNFGIMAHIDAGKTTTTERILYYTGKSHKIGEVHDGAATMDWMEQEQERGITITSAATTTFWERTEDGKTPLTPKHRFNIIDTPGHVDFTIEVERSLAVLDGAVCLLDANAGVEPQTETVWRQADRYKVPRIVFVNKMDKIGADFFNCVKMIKDRTGATPAPIALPIGAEDKLEGIIDLVTMQEWVYQGEDLGASWIIKDVRDELKAEAEEWRGKLIELAVEQDDEAMEAYLEGNEPDVPTLRKLIRKGCLAMAFVPVTAGSAFKNKGVQPVLNSVIDYLPSPLDVPAYMGFAPGDETETRNIARSADDSQPFAALAFKIMNDPFVGSLTFTRLYSGVLKKGDQMVNSTKGKRERVGRMMMMHAINREEIDEAFAGDIIALAGLKETTTGDTLCDPANQVVLETMTFPEPVIEIAVEPKTKADQEKMGLALARLAAEDPSFRVETDFESGQTIMKGMGELHLDILVDRMKREFKVEANIGAPQVAYRETISREAEIDYTHKKQTGGTGQFARVKLVITPTEPGEGYSFESKIVGGAVPKEYIPGVEKGIKSVMDSGPLAGFPVIDFRVALIDGAFHDVDSSVLAFEIASRAAMREGLKKAGAKLLEPIMKVEVVTPEEYTGGIIGDLTSRRGMVQGQDTRGNANVINAFVPLANMFGYINTLRSMSSGRAVFTMHFDHYDAVPQNISDEIQKKYA.

Positions 8–294 constitute a tr-type G domain; the sequence is ELCRNFGIMA…SVIDYLPSPL (287 aa). Residues 17-24, 92-96, and 146-149 each bind GTP; these read AHIDAGKT, DTPGH, and NKMD.

This sequence belongs to the TRAFAC class translation factor GTPase superfamily. Classic translation factor GTPase family. EF-G/EF-2 subfamily.

The protein localises to the cytoplasm. Functionally, catalyzes the GTP-dependent ribosomal translocation step during translation elongation. During this step, the ribosome changes from the pre-translocational (PRE) to the post-translocational (POST) state as the newly formed A-site-bound peptidyl-tRNA and P-site-bound deacylated tRNA move to the P and E sites, respectively. Catalyzes the coordinated movement of the two tRNA molecules, the mRNA and conformational changes in the ribosome. In Cereibacter sphaeroides (strain ATCC 17023 / DSM 158 / JCM 6121 / CCUG 31486 / LMG 2827 / NBRC 12203 / NCIMB 8253 / ATH 2.4.1.) (Rhodobacter sphaeroides), this protein is Elongation factor G.